A 115-amino-acid chain; its full sequence is Skin calcitonin gene-related peptide (115 aa).

The signal sequence occupies residues 1–25 (MVLLKISSLLAVLGLLVCQMYSSQA). A propeptide spans 26–69 (APARRALEPLPDRVTEAHRLLRALIRELTAEDMEASSSGAAHKR) (removed in mature form by a carboxypeptidase). A disulfide bridge links cysteine 71 with cysteine 76. Position 106 is a phenylalanine amide (phenylalanine 106). Residues 107-115 (GRRRRSLHV) constitute a propeptide, removed in mature form by an endoprotease.

As to expression, skin, intestine and brain.

The protein localises to the secreted. CGRP induces vasodilation. It dilates a variety of vessels including the coronary, cerebral and systemic vasculature. Its abundance in the CNS also points toward a neurotransmitter or neuromodulator role. This is Skin calcitonin gene-related peptide from Phyllomedusa bicolor (Two-colored leaf frog).